The primary structure comprises 142 residues: Gonadotropin subunit beta-2 (142 aa).

The N-terminal stretch at 1-23 (MLGLHVGTLISLFLCILLEPVEG) is a signal peptide. Disulfide bonds link C29-C77, C43-C92, C46-C130, C54-C108, C58-C110, and C113-C120. A glycan (N-linked (GlcNAc...) asparagine) is linked at N33.

The protein belongs to the glycoprotein hormones subunit beta family. Heterodimer of an alpha and a beta chain.

The protein localises to the secreted. Functionally, involved in gametogenesis and steroidogenesis. In Oncorhynchus keta (Chum salmon), this protein is Gonadotropin subunit beta-2 (cgbb).